The primary structure comprises 313 residues: Glyoxylate/hydroxypyruvate reductase A HPR2 (313 aa).

NADP(+) is bound by residues 152–155 (LGRI), 174–176 (SRT), 230–232 (IGR), and Asp-256. The active site involves Arg-232. Residue Glu-261 is part of the active site. The Proton donor role is filled by His-279. Residue 279-281 (HVG) participates in NADP(+) binding.

The protein belongs to the D-isomer specific 2-hydroxyacid dehydrogenase family. GyaR subfamily. In terms of assembly, homodimer.

The protein resides in the cytoplasm. It catalyses the reaction glycolate + NADP(+) = glyoxylate + NADPH + H(+). It carries out the reaction (R)-glycerate + NAD(+) = 3-hydroxypyruvate + NADH + H(+). The catalysed reaction is (R)-glycerate + NADP(+) = 3-hydroxypyruvate + NADPH + H(+). Strongly inhibited by oxalate. Catalyzes the NADPH-dependent reduction of glyoxylate and hydroxypyruvate (HP) into glycolate and glycerate in the cytoplasm, thus providing a cytosolic bypass to the photorespiratory core cycle. Mostly active in the presence of NADPH and hydroxypyruvate. In Arabidopsis thaliana (Mouse-ear cress), this protein is Glyoxylate/hydroxypyruvate reductase A HPR2 (HPR2).